The chain runs to 424 residues: UDP-N-acetylglucosamine 1-carboxyvinyltransferase (424 aa).

Phosphoenolpyruvate is bound at residue 22-23; sequence KN. Arg93 contributes to the UDP-N-acetyl-alpha-D-glucosamine binding site. The active-site Proton donor is Cys117. The residue at position 117 (Cys117) is a 2-(S-cysteinyl)pyruvic acid O-phosphothioketal. UDP-N-acetyl-alpha-D-glucosamine contacts are provided by residues 122–126, 164–166, Asp307, and Ile329; these read RPVDL and SVG.

This sequence belongs to the EPSP synthase family. MurA subfamily.

It is found in the cytoplasm. It carries out the reaction phosphoenolpyruvate + UDP-N-acetyl-alpha-D-glucosamine = UDP-N-acetyl-3-O-(1-carboxyvinyl)-alpha-D-glucosamine + phosphate. The protein operates within cell wall biogenesis; peptidoglycan biosynthesis. In terms of biological role, cell wall formation. Adds enolpyruvyl to UDP-N-acetylglucosamine. The chain is UDP-N-acetylglucosamine 1-carboxyvinyltransferase from Haemophilus influenzae (strain ATCC 51907 / DSM 11121 / KW20 / Rd).